We begin with the raw amino-acid sequence, 728 residues long: Bacteriophytochrome (728 aa).

An a tetrapyrrole-binding site is contributed by Cys-12. Positions 17–495 (IHVPGAIQPH…RLDLMELCLN (479 aa)) are chromophore binding domain. The GAF domain maps to 139–303 (DTASLLSNVT…IFSQVCSAIV (165 aa)). Positions 510–721 (VLGHDLRNPL…TFCLRLPVRQ (212 aa)) constitute a Histidine kinase domain. Residue His-513 is modified to Phosphohistidine; by autocatalysis.

This sequence in the N-terminal section; belongs to the phytochrome family. Post-translationally, contains one covalently linked tetrapyrrole chromophore.

The enzyme catalyses ATP + protein L-histidine = ADP + protein N-phospho-L-histidine.. Photoreceptor which exists in two forms that are reversibly interconvertible by light: the R form that absorbs maximally in the red region of the spectrum and the FR form that absorbs maximally in the far-red region. The protein is Bacteriophytochrome (bphP) of Pseudomonas aeruginosa (strain ATCC 15692 / DSM 22644 / CIP 104116 / JCM 14847 / LMG 12228 / 1C / PRS 101 / PAO1).